A 224-amino-acid polypeptide reads, in one-letter code: 7-cyano-7-deazaguanine synthase (224 aa).

12–22 (LSGGLDSSTVT) is an ATP binding site. Zn(2+) contacts are provided by Cys193, Cys201, Cys204, and Cys207.

It belongs to the QueC family. Zn(2+) is required as a cofactor.

The enzyme catalyses 7-carboxy-7-deazaguanine + NH4(+) + ATP = 7-cyano-7-deazaguanine + ADP + phosphate + H2O + H(+). Its pathway is purine metabolism; 7-cyano-7-deazaguanine biosynthesis. Catalyzes the ATP-dependent conversion of 7-carboxy-7-deazaguanine (CDG) to 7-cyano-7-deazaguanine (preQ(0)). This Prochlorococcus marinus (strain MIT 9215) protein is 7-cyano-7-deazaguanine synthase.